Here is a 709-residue protein sequence, read N- to C-terminus: Polyribonucleotide nucleotidyltransferase (709 aa).

Residues Asp486 and Asp492 each contribute to the Mg(2+) site. The 60-residue stretch at 553-612 folds into the KH domain; it reads PRIHTIKINADKIKDVIGKGGSVIRALTEETGTTIEIEDDGTVKIAATSGEQAKQAIARI. The 69-residue stretch at 622–690 folds into the S1 motif domain; sequence GRIYNGKVTR…RQGRIRLSMK (69 aa). Residues 690-709 form a disordered region; sequence KEAQATQQEAAETSSEDPAN. Residues 691-702 are compositionally biased toward low complexity; the sequence is EAQATQQEAAET.

This sequence belongs to the polyribonucleotide nucleotidyltransferase family. In terms of assembly, component of the RNA degradosome, which is a multiprotein complex involved in RNA processing and mRNA degradation. The cofactor is Mg(2+).

Its subcellular location is the cytoplasm. The enzyme catalyses RNA(n+1) + phosphate = RNA(n) + a ribonucleoside 5'-diphosphate. Involved in mRNA degradation. Catalyzes the phosphorolysis of single-stranded polyribonucleotides processively in the 3'- to 5'-direction. This chain is Polyribonucleotide nucleotidyltransferase, found in Proteus mirabilis (strain HI4320).